Consider the following 1381-residue polypeptide: Protein HEG homolog 1 (1381 aa).

The signal sequence occupies residues 1–29; it reads MASPRASRWPPPLLLLLLPLLLLPPAAPG. A disordered region spans residues 24 to 108; it reads PPAAPGTRDP…APRGGSADAA (85 aa). A compositionally biased stretch (pro residues) spans 25 to 37; the sequence is PAAPGTRDPPPSP. Topologically, residues 30–1248 are extracellular; it reads TRDPPPSPAR…GLNCGNPYQL (1219 aa). Over residues 38–52 the composition is skewed to low complexity; the sequence is ARRALSLAPLAGAGL. Basic and acidic residues predominate over residues 55 to 74; the sequence is QLERRPEREPPPTPPRERRG. O-linked (GalNAc...) threonine glycosylation is present at Thr-67. The span at 93–105 shows a compositional bias: low complexity; it reads RGPSGRAPRGGSA. 4 N-linked (GlcNAc...) asparagine glycosylation sites follow: Asn-123, Asn-159, Asn-180, and Asn-314. A compositionally biased stretch (low complexity) spans 301 to 316; that stretch reads DLSSSSESTEKLNNST. Disordered regions lie at residues 301-325 and 376-447; these read DLSSSSESTEKLNNSTGLQSSSVSQ and PSAV…RSVA. Positions 424–444 are enriched in polar residues; the sequence is LASSSEVQNGSPMSQTETVSR. N-linked (GlcNAc...) asparagine glycans are attached at residues Asn-462, Asn-520, and Asn-610. The interval 491 to 529 is disordered; that stretch reads STVQSGGSHTALGDRSYSESSSTSSSESLNSSAPRGERS. Residues 508-522 show a composition bias toward low complexity; that stretch reads SESSSTSSSESLNSS. Disordered regions lie at residues 612–680, 706–757, and 774–830; these read SSYD…PLPS, SDAS…PVTS, and QTAD…TLPA. The span at 620 to 648 shows a compositional bias: polar residues; the sequence is QPSTESPVLHTSNLPSYTPTINMPNTSVV. Composition is skewed to low complexity over residues 657–680 and 706–748; these read SDSSSSSSSSSSSSSSGPPLPLPS and SDAS…PVLP. Polar residues-rich tracts occupy residues 774–784 and 792–809; these read QTADLKSQSTP and ESKSPSLVSLPTESTKAV. Low complexity predominate over residues 810-825; the sequence is TTNSPLPPSLTESSTE. Residues 985-1023 enclose the EGF-like 1 domain; it reads SVNSCAVNPCLHNGECVADNTSRGYHCRCPPSWQGDDCS. 6 disulfides stabilise this stretch: Cys-989–Cys-1000, Cys-994–Cys-1011, Cys-1013–Cys-1022, Cys-1029–Cys-1040, Cys-1034–Cys-1049, and Cys-1051–Cys-1062. In terms of domain architecture, EGF-like 2; calcium-binding spans 1025 to 1063; it reads DVNECLSNPCPSTAMCNNTQGSFICKCPVGYQLEKGICN. The N-linked (GlcNAc...) asparagine glycan is linked to Asn-1137. A helical membrane pass occupies residues 1249-1269; sequence ITVVIAAAGGGLLLILGIALI. At 1270 to 1381 the chain is on the cytoplasmic side; it reads VTCCRKNKND…SDESRRRDYF (112 aa). Ser-1359 is subject to Phosphoserine.

Interacts with CCM2 and KRIT1; KRIT1 markedly facilitates interaction with CCM2.

The protein resides in the cell membrane. It localises to the cell junction. Its subcellular location is the secreted. Receptor component of the CCM signaling pathway which is a crucial regulator of heart and vessel formation and integrity. May act through the stabilization of endothelial cell junctions. The chain is Protein HEG homolog 1 (HEG1) from Homo sapiens (Human).